A 630-amino-acid chain; its full sequence is Alpha-1,4-glucan:maltose-1-phosphate maltosyltransferase (630 aa).

Residues R234, Q294, and D329 each coordinate alpha-maltose 1-phosphate. D365 functions as the Nucleophile in the catalytic mechanism. N366 contacts alpha-maltose 1-phosphate. The Proton donor role is filled by E394. Residue 504 to 505 (KY) participates in alpha-maltose 1-phosphate binding.

This sequence belongs to the glycosyl hydrolase 13 family. GlgE subfamily. As to quaternary structure, homodimer.

It carries out the reaction alpha-maltose 1-phosphate + [(1-&gt;4)-alpha-D-glucosyl](n) = [(1-&gt;4)-alpha-D-glucosyl](n+2) + phosphate. Functionally, maltosyltransferase that uses maltose 1-phosphate (M1P) as the sugar donor to elongate linear or branched alpha-(1-&gt;4)-glucans. Is involved in a branched alpha-glucan biosynthetic pathway from trehalose, together with TreS, Mak and GlgB. This Picrophilus torridus (strain ATCC 700027 / DSM 9790 / JCM 10055 / NBRC 100828 / KAW 2/3) protein is Alpha-1,4-glucan:maltose-1-phosphate maltosyltransferase.